The sequence spans 861 residues: MDESALLDLLECPVCLERLDASAKVLPCQHTFCKRCLLGIVSSRNELRCPECRTLVECGVDELPSNILLVRLLDGIKQRPRKAGVGGSAGNSTNVLRAQGSLTTNCGLNDAQNIHGGQQRIQARSPPVRGVPQLPCAKALYNYEGKEPGDLKFNKGDIIVLRRQVDENWYHGEINGIHGFFPTNFVQIIKPLPQPPPQCKALYDFEVKDKEADKDCLPFLKDDILTVIRRVDENWAEGMLGDKIGIFPISYVEFNSAAKQLIELDKPSGVDTGEGSSGTTHSSNSQKQADAKKNTKKRHSFTSLTMSNKSSQSVQNRHSMEISPPVLISSSNPTAAARISELTGLSCSAPSQVHISTTGLIVTPPPSSPVVSGPAFTFPPEVTYQAALGDLNPPLLPPPPLATPVITSTSSGAAAAVQRSISGPAEQVTHLRTSTRPSVFVAIYPYIPRKEDELELRKGEMFLVFERCQDGWFKGTSMHTSKIGVFPGNYVAPVTRALTTATPAKVAMATASSSNVVNLVTPTPPGAPCQKLQGNGAEFAKTVSTNGVPPAGIPGSHIQSSPQAKVLLHMSGQMTVNQARNAVRTAAAHSQDRPTAAVTPIQAQIPSASVLPQQAATSQQMPPPLSGPAAYINAAMNISRPSVPVASAASSSVSSAAFETECNWKSGSGLAACSFPENVSAPLNSAANKQDKDSKKEKKGLLKLLSGASTKRKPRSSPPHSPTQELEQTNSEAALEGAVGPDILPVNGNGRVASCTVDCDLVSASALVQDNRKPASLDTNVPIAPPPRQPCSSLGTVLNDSRPCERYRVVVSYPPQSEAELELKEGDIVFVHKKREDGWFKGTLQRNGKTGLFPGSFVENI.

Residues 12-53 (CPVCLERLDASAKVLPCQHTFCKRCLLGIVSSRNELRCPECR) form an RING-type zinc finger. 2 SH3 domains span residues 132–191 (PQLP…IIKP) and 194–257 (QPPP…FNSA). The segment at 268–319 (SGVDTGEGSSGTTHSSNSQKQADAKKNTKKRHSFTSLTMSNKSSQSVQNRHS) is disordered. Residues 273-285 (GEGSSGTTHSSNS) are compositionally biased toward low complexity. Polar residues predominate over residues 301–317 (FTSLTMSNKSSQSVQNR). An SH3 3 domain is found at 435 to 496 (TRPSVFVAIY…PGNYVAPVTR (62 aa)). Residues 684–731 (NSAANKQDKDSKKEKKGLLKLLSGASTKRKPRSSPPHSPTQELEQTNS) form a disordered region. Residues 689–700 (KQDKDSKKEKKG) are compositionally biased toward basic and acidic residues. Positions 802 to 861 (RPCERYRVVVSYPPQSEAELELKEGDIVFVHKKREDGWFKGTLQRNGKTGLFPGSFVENI) constitute an SH3 4 domain.

It belongs to the SH3RF family. Post-translationally, autoubiquitinated. Ubiquitinated by SH3RF2, leading to proteasome-mediated degradation.

The protein resides in the cytoplasm. The protein localises to the perinuclear region. It is found in the cell projection. It localises to the lamellipodium. Its subcellular location is the golgi apparatus. The protein resides in the trans-Golgi network. It catalyses the reaction S-ubiquitinyl-[E2 ubiquitin-conjugating enzyme]-L-cysteine + [acceptor protein]-L-lysine = [E2 ubiquitin-conjugating enzyme]-L-cysteine + N(6)-ubiquitinyl-[acceptor protein]-L-lysine.. It functions in the pathway protein modification; protein ubiquitination. Its function is as follows. Has E3 ubiquitin-protein ligase activity. In the absence of an external substrate, it can catalyze self-ubiquitination. Acts as a scaffold protein that contributes to the effective activation of the JNK signaling pathway. This chain is E3 ubiquitin-protein ligase SH3RF1 (sh3rf1), found in Xenopus tropicalis (Western clawed frog).